The sequence spans 409 residues: NADH-quinone oxidoreductase subunit D (409 aa).

This sequence belongs to the complex I 49 kDa subunit family. NDH-1 is composed of 14 different subunits. Subunits NuoB, C, D, E, F, and G constitute the peripheral sector of the complex.

Its subcellular location is the cell inner membrane. The catalysed reaction is a quinone + NADH + 5 H(+)(in) = a quinol + NAD(+) + 4 H(+)(out). NDH-1 shuttles electrons from NADH, via FMN and iron-sulfur (Fe-S) centers, to quinones in the respiratory chain. The immediate electron acceptor for the enzyme in this species is believed to be ubiquinone. Couples the redox reaction to proton translocation (for every two electrons transferred, four hydrogen ions are translocated across the cytoplasmic membrane), and thus conserves the redox energy in a proton gradient. This is NADH-quinone oxidoreductase subunit D from Campylobacter curvus (strain 525.92).